The chain runs to 159 residues: 2-C-methyl-D-erythritol 2,4-cyclodiphosphate synthase (159 aa).

Asp-8 and His-10 together coordinate a divalent metal cation. Residues 8–10 (DVH) and 34–35 (HS) each bind 4-CDP-2-C-methyl-D-erythritol 2-phosphate. His-42 is an a divalent metal cation binding site. 4-CDP-2-C-methyl-D-erythritol 2-phosphate-binding positions include 56-58 (DIG), 61-65 (FPDTD), 100-106 (AQAPKML), 132-135 (TTTE), Phe-139, and Arg-142.

The protein belongs to the IspF family. As to quaternary structure, homotrimer. A divalent metal cation serves as cofactor.

The enzyme catalyses 4-CDP-2-C-methyl-D-erythritol 2-phosphate = 2-C-methyl-D-erythritol 2,4-cyclic diphosphate + CMP. The protein operates within isoprenoid biosynthesis; isopentenyl diphosphate biosynthesis via DXP pathway; isopentenyl diphosphate from 1-deoxy-D-xylulose 5-phosphate: step 4/6. Involved in the biosynthesis of isopentenyl diphosphate (IPP) and dimethylallyl diphosphate (DMAPP), two major building blocks of isoprenoid compounds. Catalyzes the conversion of 4-diphosphocytidyl-2-C-methyl-D-erythritol 2-phosphate (CDP-ME2P) to 2-C-methyl-D-erythritol 2,4-cyclodiphosphate (ME-CPP) with a corresponding release of cytidine 5-monophosphate (CMP). This is 2-C-methyl-D-erythritol 2,4-cyclodiphosphate synthase from Escherichia coli O139:H28 (strain E24377A / ETEC).